A 177-amino-acid chain; its full sequence is ATP synthase subunit delta (177 aa).

The protein belongs to the ATPase delta chain family. In terms of assembly, F-type ATPases have 2 components, F(1) - the catalytic core - and F(0) - the membrane proton channel. F(1) has five subunits: alpha(3), beta(3), gamma(1), delta(1), epsilon(1). F(0) has three main subunits: a(1), b(2) and c(10-14). The alpha and beta chains form an alternating ring which encloses part of the gamma chain. F(1) is attached to F(0) by a central stalk formed by the gamma and epsilon chains, while a peripheral stalk is formed by the delta and b chains.

Its subcellular location is the cell inner membrane. F(1)F(0) ATP synthase produces ATP from ADP in the presence of a proton or sodium gradient. F-type ATPases consist of two structural domains, F(1) containing the extramembraneous catalytic core and F(0) containing the membrane proton channel, linked together by a central stalk and a peripheral stalk. During catalysis, ATP synthesis in the catalytic domain of F(1) is coupled via a rotary mechanism of the central stalk subunits to proton translocation. In terms of biological role, this protein is part of the stalk that links CF(0) to CF(1). It either transmits conformational changes from CF(0) to CF(1) or is implicated in proton conduction. This Neisseria gonorrhoeae (strain ATCC 700825 / FA 1090) protein is ATP synthase subunit delta.